Reading from the N-terminus, the 900-residue chain is Translation initiation factor IF-2 (900 aa).

Basic and acidic residues-rich tracts occupy residues 119-158 (AAKA…EKQE), 165-191 (ADEK…KADA), and 198-229 (EEAR…DHHV). The segment at 119 to 306 (AAKAEAEAKA…NARSVAPESM (188 aa)) is disordered. The segment covering 257 to 272 (SANAGNNANSNSNAGS) has biased composition (low complexity). In terms of domain architecture, tr-type G spans 400–569 (PRAPVVTIMG…LLESEVLELK (170 aa)). The tract at residues 409–416 (GHVDHGKT) is G1. 409–416 (GHVDHGKT) lines the GTP pocket. The segment at 434 to 438 (GITQH) is G2. The segment at 455 to 458 (DTPG) is G3. GTP-binding positions include 455-459 (DTPGH) and 509-512 (NKID). Residues 509-512 (NKID) are G4. A G5 region spans residues 545–547 (SAK).

This sequence belongs to the TRAFAC class translation factor GTPase superfamily. Classic translation factor GTPase family. IF-2 subfamily.

It localises to the cytoplasm. One of the essential components for the initiation of protein synthesis. Protects formylmethionyl-tRNA from spontaneous hydrolysis and promotes its binding to the 30S ribosomal subunits. Also involved in the hydrolysis of GTP during the formation of the 70S ribosomal complex. This Shewanella piezotolerans (strain WP3 / JCM 13877) protein is Translation initiation factor IF-2.